The primary structure comprises 560 residues: Bifunctional NAD(P)H-hydrate repair enzyme (560 aa).

The interval Met1–Ala241 is NAD(P)H-hydrate epimerase. Residues Leu29–Ala235 form the YjeF N-terminal domain. Positions Asn77–Asp81 are NADPHX 1; for epimerase activity. K(+) contacts are provided by Asn78 and Asp145. The interval Gly149–Pro155 is NADPHX 1; for epimerase activity. Positions 160 and 178 each coordinate (6S)-NADPHX. Ser181 serves as a coordination point for K(+). One can recognise a YjeF C-terminal domain in the interval Leu249 to Ser547. The segment at Leu249–Pro560 is ADP-dependent (S)-NAD(P)H-hydrate dehydratase. A (6S)-NADPHX-binding site is contributed by Gly351. Positions His417–Arg423 are NADPHX 2; for dehydratase activity. ADP contacts are provided by residues Lys454–Thr458 and Asn475–Gly484. Asp485 contacts (6S)-NADPHX.

The protein in the N-terminal section; belongs to the NnrE/AIBP family. It in the C-terminal section; belongs to the NnrD/CARKD family. K(+) is required as a cofactor.

The catalysed reaction is (6S)-NADHX + ADP = AMP + phosphate + NADH + H(+). It catalyses the reaction (6S)-NADPHX + ADP = AMP + phosphate + NADPH + H(+). It carries out the reaction (6R)-NADHX = (6S)-NADHX. The enzyme catalyses (6R)-NADPHX = (6S)-NADPHX. In terms of biological role, bifunctional enzyme that catalyzes the epimerization of the S- and R-forms of NAD(P)HX and the dehydration of the S-form of NAD(P)HX at the expense of ADP, which is converted to AMP. This allows the repair of both epimers of NAD(P)HX, a damaged form of NAD(P)H that is a result of enzymatic or heat-dependent hydration. The polypeptide is Bifunctional NAD(P)H-hydrate repair enzyme (Leishmania infantum).